A 668-amino-acid chain; its full sequence is Penicillin-binding protein 3 (668 aa).

A helical transmembrane segment spans residues Leu7–Lys23. Ser410 serves as the catalytic Acyl-ester intermediate.

This sequence belongs to the transpeptidase family.

Its subcellular location is the cell membrane. The protein resides in the forespore inner membrane. It is found in the forespore outer membrane. It localises to the membrane raft. The enzyme catalyses Preferential cleavage: (Ac)2-L-Lys-D-Ala-|-D-Ala. Also transpeptidation of peptidyl-alanyl moieties that are N-acyl substituents of D-alanine.. It participates in cell wall biogenesis; peptidoglycan biosynthesis. Its function is as follows. Penicillin-binding proteins (PBPs) function in the late steps of murein biosynthesis. Probably required for both cortical and vegetative peptidoglycan synthesis. Although not usually required for cell division, in the absence of PBP 2B (pbpB) it becomes essential. Confers resistance to oxacillin and cephalexin. This Bacillus subtilis (strain 168) protein is Penicillin-binding protein 3.